The primary structure comprises 365 residues: Glycerol dehydrogenase (365 aa).

The NAD(+) site is built by Asp37, Gly94, Lys95, Thr116, and Ser119. Asp121 contributes to the glycerol binding site. Residues Ser125, Leu127, and Tyr131 each coordinate NAD(+). Asp171, His254, and His271 together coordinate Zn(2+). Residue His254 coordinates glycerol.

This sequence belongs to the iron-containing alcohol dehydrogenase family. It depends on Zn(2+) as a cofactor.

The enzyme catalyses glycerol + NAD(+) = dihydroxyacetone + NADH + H(+). Its pathway is polyol metabolism; glycerol fermentation; glycerone phosphate from glycerol (oxidative route): step 1/2. Its function is as follows. Catalyzes the NAD-dependent oxidation of glycerol to dihydroxyacetone (glycerone). Allows microorganisms to utilize glycerol as a source of carbon under anaerobic conditions. The polypeptide is Glycerol dehydrogenase (gldA) (Pseudomonas putida (Arthrobacter siderocapsulatus)).